A 378-amino-acid chain; its full sequence is 5-amino-6-(D-ribitylamino)uracil--L-tyrosine 4-hydroxyphenyl transferase (378 aa).

One can recognise a Radical SAM core domain in the interval 59–306 (VTYVINRNIN…TAVARIYLGN (248 aa)). [4Fe-4S] cluster contacts are provided by cysteine 73, cysteine 77, and cysteine 80.

It belongs to the radical SAM superfamily. CofH family. As to quaternary structure, consists of two subunits, CofG and CofH. [4Fe-4S] cluster is required as a cofactor.

It carries out the reaction 5-amino-6-(D-ribitylamino)uracil + L-tyrosine + S-adenosyl-L-methionine = 5-amino-5-(4-hydroxybenzyl)-6-(D-ribitylimino)-5,6-dihydrouracil + 2-iminoacetate + 5'-deoxyadenosine + L-methionine + H(+). It participates in cofactor biosynthesis; coenzyme F0 biosynthesis. In terms of biological role, catalyzes the radical-mediated synthesis of 5-amino-5-(4-hydroxybenzyl)-6-(D-ribitylimino)-5,6-dihydrouracil from 5-amino-6-(D-ribitylamino)uracil and L-tyrosine. The chain is 5-amino-6-(D-ribitylamino)uracil--L-tyrosine 4-hydroxyphenyl transferase from Microcystis aeruginosa (strain NIES-843 / IAM M-2473).